The following is a 315-amino-acid chain: Neurogenic differentiation factor 4 (315 aa).

The segment at 39 to 71 (ERGSIDGEEDDEEEEDGEKPKKRGPKKKKMTKA) is disordered. The segment covering 44–55 (DGEEDDEEEEDG) has biased composition (acidic residues). A compositionally biased stretch (basic residues) spans 58-70 (PKKRGPKKKKMTK). The 53-residue stretch at 78–130 (VRRVKANARERSRMHGLNDALENLRRVMPCYSKTQKLSKIETLRLARNYIWAL) folds into the bHLH domain. Residue serine 89 is modified to Phosphoserine.

Efficient DNA binding requires dimerization with another bHLH protein. Forms a heterodimer with the bHLH protein hes2, and weakly interacts with hey1/hrt1. Serine or threonine phosphorylation within the basic region may regulate neurogenic activity. In terms of tissue distribution, first expressed weakly at stage 12 in primary neuronal precursors. At stages 18 and 21, strongly expressed in the cranial ganglions, with weaker expression remaining in the spinal cord. Later, strongly expressed at sites of neuronal differentiation, namely the eye, forebrain and cranial ganglions.

It localises to the nucleus. In terms of biological role, probably acts as a transcriptional activator. Mediates neuronal differentiation. Required for the regulation of amacrine cell fate specification in the retina. In Xenopus laevis (African clawed frog), this protein is Neurogenic differentiation factor 4 (neurod4).